The sequence spans 2639 residues: BAH and coiled-coil domain-containing protein 1 (2639 aa).

Disordered stretches follow at residues 23–49 (SAAA…GKYF), 84–107 (SAAS…GSHP), 188–249 (APAH…GKER), 669–702 (FLSS…RQPP), 716–746 (VSRS…PRST), 939–1047 (QRAA…QSTA), 1104–1331 (SDVH…HSSG), 1457–1513 (QREL…KKVK), 1582–1666 (KVKS…LGTE), 1722–1776 (EVKI…RDAL), 1868–1893 (FDDN…PLSA), and 2057–2119 (KKVS…DHFL). Low complexity-rich tracts occupy residues 24 to 41 (AAAA…QPPA) and 84 to 98 (SAAS…SSPP). 2 stretches are compositionally biased toward basic and acidic residues: residues 211–247 (GPKD…DGGK) and 679–698 (ERPD…DGEV). At lysine 222 the chain carries N6-acetyllysine. Residues 946–964 (RKPEDQHLDLEEPAQEKAP) show a composition bias toward basic and acidic residues. Residues 972–988 (ALTPTAPGAPSPAAGPT) show a composition bias toward low complexity. Over residues 989–1013 (KLPPCCHPPDPKPPASSPTPPPRPS) the composition is skewed to pro residues. A compositionally biased stretch (polar residues) spans 1106 to 1122 (VHSSNLEDPETMQTTAP). Low complexity predominate over residues 1182–1198 (LEGLQELQCAALLEAGG). The segment covering 1212 to 1221 (AREERSREEG) has biased composition (basic and acidic residues). Residues 1244–1275 (LEDEGEQPAPEEDELEEDELGQQSMEDSEEDC) show a composition bias toward acidic residues. Positions 1307–1324 (DSPPDPQPPAASGPPSTV) are enriched in pro residues. Residues 1439-1473 (EVGMRVRLAELQRRYKEKQRELARLQRKHDHERDE) adopt a coiled-coil conformation. Over residues 1457–1475 (QRELARLQRKHDHERDESS) the composition is skewed to basic and acidic residues. A compositionally biased stretch (basic residues) spans 1478–1492 (PARRGPGRPRKRKHS). A compositionally biased stretch (basic residues) spans 1751–1761 (GKKKAKGKAKG). Residues 1868-1888 (FDDNSSFSEEEEDEEEEEEDS) show a composition bias toward acidic residues. The residue at position 2274 (serine 2274) is a Phosphoserine. Disordered regions lie at residues 2317–2336 (SDCH…LAAG), 2348–2383 (SSSS…SDDE), and 2432–2472 (GAGS…ENRP). Over residues 2348–2371 (SSSSSGSSTSSSSGSVSTSSLCSS) the composition is skewed to low complexity. A compositionally biased stretch (acidic residues) spans 2372 to 2383 (DNEDSSYSSDDE). Over residues 2432 to 2442 (GAGSGPSSSSK) the composition is skewed to low complexity. Positions 2513-2633 (ETLRVGDCAV…PTTGRLVTAD (121 aa)) constitute a BAH domain.

This Homo sapiens (Human) protein is BAH and coiled-coil domain-containing protein 1.